A 617-amino-acid polypeptide reads, in one-letter code: E3 ubiquitin-protein ligase synoviolin (617 aa).

Residues 1–4 (MFRT) are Cytoplasmic-facing. Positions 1–84 (MFRTAVMMAA…EHLLERSWYA (84 aa)) are necessary and sufficient for SEL1L interaction. An involved in FAM8A1 interaction region spans residues 1–251 (MFRTAVMMAA…LFAIRPMYLA (251 aa)). A helical membrane pass occupies residues 5–25 (AVMMAASLALTGAVVAHAYYL). At 26-41 (KHQFYPTVVYLTKSSP) the chain is on the lumenal side. A helical transmembrane segment spans residues 42 to 62 (SMAVLYIQAFVLVFLLGKVMG). Over 63 to 98 (KVFFGQLRAAEMEHLLERSWYAVTETCLAFTVFRDD) the chain is Cytoplasmic. A helical transmembrane segment spans residues 99–119 (FSPRFVALFTLLLFLKCFHWL). Residues 120 to 140 (AEDRVDFMERSPNISWLFHCR) lie on the Lumenal side of the membrane. The chain crosses the membrane as a helical span at residues 141–161 (IVSLMFLLGILDFLFVSHAYH). The Cytoplasmic portion of the chain corresponds to 162-169 (SILTRGAS). The chain crosses the membrane as a helical span at residues 170–190 (VQLVFGFEYAILMTMVLTIFI). At 191–224 (KYVLHSVDLQSENPWDNKAVYMLYTELFTGFIKV) the chain is on the lumenal side. Residues 225 to 245 (LLYMAFMTIMIKVHTFPLFAI) form a helical membrane-spanning segment. The segment at 236 to 270 (KVHTFPLFAIRPMYLAMRQFKKAVTDAIMSRRAIR) is interaction with p53/TP53. Residues 246–617 (RPMYLAMRQF…LQKLESPVAH (372 aa)) are Cytoplasmic-facing. 8 residues coordinate Zn(2+): C291, C294, C307, H309, H312, C315, C326, and C329. The RING-type; atypical zinc-finger motif lies at 291-330 (CIICREEMVTGAKRLPCNHIFHTSCLRSWFQRQQTCPTCR). Disordered stretches follow at residues 337–375 (SLPAQSPPPPEPADQGPPPAPHPPPLLPQPPNFPQGLLP), 393–453 (PVPP…PAPG), and 535–617 (RPAT…PVAH). The segment covering 341 to 375 (QSPPPPEPADQGPPPAPHPPPLLPQPPNFPQGLLP) has biased composition (pro residues). Over residues 417–451 (PSGAATTTAAGTSATAASATASGPGSGSAPEAGPA) the composition is skewed to low complexity. The segment at 480-535 (GFAGLTPEELRALEGHERQHLEARLQSLRNIHTLLDAAMLQINQYLTVLASLGPPR) is HAF-H domain; necessary to form higher-order Hrd1 complexes. Low complexity predominate over residues 537 to 569 (ATSVNSTEETATTVVAAASSTSIPSSEATTPTP). Residues 591–600 (EMPEDGEPDA) are compositionally biased toward acidic residues. Position 613 is a phosphoserine (S613).

This sequence belongs to the HRD1 family. Homodimer. Interacts with p53/TP53. Interacts with HTT. Component of the HRD1 complex, which comprises at least SYNV1/HRD1, DERL1/2, FAM8A1, HERPUD1/HERP, OS9, SEL1L and UBE2J1. FAM8A1 is stabilized by interaction with SYNV1, which prevents its proteasomal degradation. OS9 and UBE2J1 recruitment to the complex may be mediated by SEL1L. SYNV1 assembles with SEL1L and FAM8A1 through its transmembrane domains, but interaction with its cytoplasmic domain is required to confer stability to FAM8A1 and enhance recruitment of HERPUD1. The HRD1 complex also associates with VIMP and may transfer misfolded proteins from the endoplasmic reticulum to VCP. May form a complex with ERLEC1, HSPA5, OS9 and SEL1L. Interacts with VCP. Interacts with UBXN6. Interacts with BAG6. Interacts with NFE2L1. Interacts (via N-terminus) with components of the pre-B cell receptor, including IGLL1 and VPREB1. Interacts with CREB3L3; this interaction leads to CREB3L3 ubiquitination and proteasomal degradation. In terms of processing, not N-glycosylated. Post-translationally, auto-ubiquitinated. Deubiquitinated by USP19. Ubiquitously expressed, with highest levels in liver and kidney (at protein level). Up-regulated in synovial tissues from patients with rheumatoid arthritis (at protein level).

It is found in the endoplasmic reticulum membrane. The enzyme catalyses S-ubiquitinyl-[E2 ubiquitin-conjugating enzyme]-L-cysteine + [acceptor protein]-L-lysine = [E2 ubiquitin-conjugating enzyme]-L-cysteine + N(6)-ubiquitinyl-[acceptor protein]-L-lysine.. The protein operates within protein modification; protein ubiquitination. Its function is as follows. E3 ubiquitin-protein ligase which accepts ubiquitin specifically from endoplasmic reticulum-associated UBC7 E2 ligase and transfers it to substrates, promoting their degradation. Component of the endoplasmic reticulum quality control (ERQC) system also called ER-associated degradation (ERAD) involved in ubiquitin-dependent degradation of misfolded endoplasmic reticulum proteins. Also promotes the degradation of normal but naturally short-lived proteins such as SGK. Protects cells from ER stress-induced apoptosis. Protects neurons from apoptosis induced by polyglutamine-expanded huntingtin (HTT) or unfolded GPR37 by promoting their degradation. Sequesters p53/TP53 in the cytoplasm and promotes its degradation, thereby negatively regulating its biological function in transcription, cell cycle regulation and apoptosis. Mediates the ubiquitination and subsequent degradation of cytoplasmic NFE2L1. During the early stage of B cell development, required for degradation of the pre-B cell receptor (pre-BCR) complex, hence supporting further differentiation into mature B cells. This chain is E3 ubiquitin-protein ligase synoviolin, found in Homo sapiens (Human).